A 334-amino-acid chain; its full sequence is NmrA-like family domain-containing oxidoreductase lnaB (334 aa).

NADP(+) contacts are provided by residues 12–17 (GGTGKQ), 38–42 (RNAQS), 59–60 (DG), 80–82 (INS), lysine 138, and 162–165 (FLEN).

The protein belongs to the NmrA-type oxidoreductase family.

Its pathway is secondary metabolite biosynthesis. In terms of biological role, nmrA-like family domain-containing oxidoreductase; part of the lna gene cluster that mediates the biosynthesis of diastereomeric piperazines. Lna and lnb clusters encode sets of enzymes that produce overlapping sets of previously undescribed metabolites such as piperazinomycin-like metabolites or morpholine. The lna and lnb biosynthetic pathways appear to be part of a signaling network that controls the formation of sclerotia, a resilient overwintering structure. One primary function of the non-canonical nonribosomal peptide synthetases lnaA and lnbA consists in the reduction of L-tyrosine. The presence in the clusters of tailoring enzymes such as the oxidoreductases lnaB, lnbB, lnaE or lnbE, as well as of the cytochrome P450 monooxygenases lnaC, lnaD, or lnbC, might explain formation of various diastereomeric piperazines. This Aspergillus flavus (strain ATCC 200026 / FGSC A1120 / IAM 13836 / NRRL 3357 / JCM 12722 / SRRC 167) protein is NmrA-like family domain-containing oxidoreductase lnaB.